Reading from the N-terminus, the 451-residue chain is Adenylyltransferase and sulfurtransferase MOCS3-1 (451 aa).

The interval 42-62 is disordered; that stretch reads GEDSDEAEESSNDMPTPQTKL. The segment covering 43–52 has biased composition (acidic residues); that stretch reads EDSDEAEESS. Thr60 is modified (phosphothreonine). Residues Gly99, Asp120, 127 to 131, Lys144, and 188 to 189 contribute to the ATP site; these read SNLHR and DN. The Zn(2+) site is built by Cys229 and Cys232. The active-site Glycyl thioester intermediate; for adenylyltransferase activity is Cys246. 2 residues coordinate Zn(2+): Cys304 and Cys307. A Rhodanese domain is found at 353-449; sequence QSQPHLLLDV…WTGSVDATFP (97 aa). Residue Cys408 is the Cysteine persulfide intermediate; for sulfurtransferase activity of the active site.

This sequence in the N-terminal section; belongs to the HesA/MoeB/ThiF family. UBA4 subfamily. Requires Zn(2+) as cofactor.

Its subcellular location is the cytoplasm. It catalyses the reaction [molybdopterin-synthase sulfur-carrier protein]-C-terminal Gly-Gly + ATP + H(+) = [molybdopterin-synthase sulfur-carrier protein]-C-terminal Gly-Gly-AMP + diphosphate. It carries out the reaction [molybdopterin-synthase sulfur-carrier protein]-C-terminal Gly-Gly-AMP + S-sulfanyl-L-cysteinyl-[cysteine desulfurase] + AH2 = [molybdopterin-synthase sulfur-carrier protein]-C-terminal-Gly-aminoethanethioate + L-cysteinyl-[cysteine desulfurase] + A + AMP + 2 H(+). The protein operates within tRNA modification; 5-methoxycarbonylmethyl-2-thiouridine-tRNA biosynthesis. It functions in the pathway cofactor biosynthesis; molybdopterin biosynthesis. Its function is as follows. Plays a central role in 2-thiolation of mcm(5)S(2)U at tRNA wobble positions of cytosolic tRNA(Lys), tRNA(Glu) and tRNA(Gln). Also essential during biosynthesis of the molybdenum cofactor. Acts by mediating the C-terminal thiocarboxylation of sulfur carriers URM1 and MOCS2A. Its N-terminus first activates URM1 and MOCS2A as acyl-adenylates (-COAMP), then the persulfide sulfur on the catalytic cysteine is transferred to URM1 and MOCS2A to form thiocarboxylation (-COSH) of their C-terminus. The reaction probably involves hydrogen sulfide that is generated from the persulfide intermediate and that acts as a nucleophile towards URM1 and MOCS2A. Subsequently, a transient disulfide bond is formed. Does not use thiosulfate as sulfur donor; NFS1 probably acting as a sulfur donor for thiocarboxylation reactions. This is Adenylyltransferase and sulfurtransferase MOCS3-1 from Drosophila pseudoobscura pseudoobscura (Fruit fly).